A 463-amino-acid polypeptide reads, in one-letter code: Arginine biosynthesis bifunctional protein ArgJ, chloroplastic (463 aa).

Substrate is bound by residues threonine 207, lysine 233, threonine 244, glutamate 331, asparagine 458, and threonine 463. Threonine 244 acts as the Nucleophile in catalysis.

It belongs to the ArgJ family. As to quaternary structure, heterodimer of an alpha and a beta chain.

The protein localises to the plastid. The protein resides in the chloroplast. It carries out the reaction N(2)-acetyl-L-ornithine + L-glutamate = N-acetyl-L-glutamate + L-ornithine. It catalyses the reaction L-glutamate + acetyl-CoA = N-acetyl-L-glutamate + CoA + H(+). Its pathway is amino-acid biosynthesis; L-arginine biosynthesis; L-ornithine and N-acetyl-L-glutamate from L-glutamate and N(2)-acetyl-L-ornithine (cyclic): step 1/1. The protein operates within amino-acid biosynthesis; L-arginine biosynthesis; N(2)-acetyl-L-ornithine from L-glutamate: step 1/4. Its function is as follows. Catalyzes two activities which are involved in the cyclic version of arginine biosynthesis: the synthesis of acetylglutamate from glutamate and acetyl-CoA, and of ornithine by transacetylation between acetylornithine and glutamate. This Oryza sativa subsp. japonica (Rice) protein is Arginine biosynthesis bifunctional protein ArgJ, chloroplastic.